The sequence spans 437 residues: Glutamyl-tRNA reductase (437 aa).

Substrate is bound by residues 46–49 (TCNR), Ser97, 102–104 (EEQ), and Gln108. Cys47 serves as the catalytic Nucleophile. 177 to 182 (GAGEMG) is a binding site for NADP(+). Residues 410–437 (NGRVSEGKDAKVEEGKPEVDVQRSKAES) are disordered. A compositionally biased stretch (basic and acidic residues) spans 414 to 437 (SEGKDAKVEEGKPEVDVQRSKAES).

The protein belongs to the glutamyl-tRNA reductase family. In terms of assembly, homodimer.

The catalysed reaction is (S)-4-amino-5-oxopentanoate + tRNA(Glu) + NADP(+) = L-glutamyl-tRNA(Glu) + NADPH + H(+). The protein operates within porphyrin-containing compound metabolism; protoporphyrin-IX biosynthesis; 5-aminolevulinate from L-glutamyl-tRNA(Glu): step 1/2. Functionally, catalyzes the NADPH-dependent reduction of glutamyl-tRNA(Glu) to glutamate 1-semialdehyde (GSA). The chain is Glutamyl-tRNA reductase from Archaeoglobus fulgidus (strain ATCC 49558 / DSM 4304 / JCM 9628 / NBRC 100126 / VC-16).